Here is a 213-residue protein sequence, read N- to C-terminus: Motile sperm domain-containing protein 1 (213 aa).

The 128-residue stretch at 16-143 (PVFVFPTELI…KEHLTESVFF (128 aa)) folds into the MSP domain. 2 helical membrane-spanning segments follow: residues 159–179 (SLLT…PTLG) and 191–211 (LSVN…MAIL). A Nuclear export signal motif is present at residues 205–208 (LITM).

In terms of tissue distribution, widely expressed. Shows highest expression in ribs, and slightly lower levels of expression in heart, kidney, muscle, thymus, calvariae and lung. Also detected at low levels in spleen and liver.

Its subcellular location is the endoplasmic reticulum membrane. It localises to the golgi apparatus membrane. Its function is as follows. Plays a role in differentiation and/or proliferation of mesenchymal stem cells. Proposed to be involved in epithelial-to-mesenchymal transition (EMT). However, another study suggests that it is not required for EMT or stem cell self-renewal and acts during later stages of differentiation. This chain is Motile sperm domain-containing protein 1 (Mospd1), found in Mus musculus (Mouse).